Reading from the N-terminus, the 156-residue chain is SsrA-binding protein (156 aa).

The segment at 130 to 156 (KFDKRDDLKKKDAKRDIDRALRDKQKY) is disordered. Positions 132–156 (DKRDDLKKKDAKRDIDRALRDKQKY) are enriched in basic and acidic residues.

This sequence belongs to the SmpB family.

It is found in the cytoplasm. In terms of biological role, required for rescue of stalled ribosomes mediated by trans-translation. Binds to transfer-messenger RNA (tmRNA), required for stable association of tmRNA with ribosomes. tmRNA and SmpB together mimic tRNA shape, replacing the anticodon stem-loop with SmpB. tmRNA is encoded by the ssrA gene; the 2 termini fold to resemble tRNA(Ala) and it encodes a 'tag peptide', a short internal open reading frame. During trans-translation Ala-aminoacylated tmRNA acts like a tRNA, entering the A-site of stalled ribosomes, displacing the stalled mRNA. The ribosome then switches to translate the ORF on the tmRNA; the nascent peptide is terminated with the 'tag peptide' encoded by the tmRNA and targeted for degradation. The ribosome is freed to recommence translation, which seems to be the essential function of trans-translation. The chain is SsrA-binding protein from Exiguobacterium sibiricum (strain DSM 17290 / CCUG 55495 / CIP 109462 / JCM 13490 / 255-15).